A 347-amino-acid polypeptide reads, in one-letter code: MTSDGTPTQSGRYPAGGHAFPHGSLTGIAQLERHEILYLLDEAEQWVDFNRQSEKHCDLLAGLTIINAFFENSTRTLLSFEIAGKRLGADVVNMHAAQSSVKKGETLIDTAITLNAMRADAIVIRHGSSGAVDLIASKVDCPVLNAGDGQHEHPTQALLDALALRHALEARGEGSEDFTGLTITICGDILHSRVARSNILCLQAMGASVRVCAPPALMPVGIERMGAEPFHDFDAALKGCDVAMMLRLQTERMSGQFIPSAREYHHLYGLTQHRLQRCAPDALVMHPGPMNRGVEIDSDVADMLDRSIITRQVEMGVAVRMACLDILTRKGRGLPGWQGDLGKGQWA.

Carbamoyl phosphate is bound by residues R75 and T76. Residue K103 participates in L-aspartate binding. Carbamoyl phosphate is bound by residues R125, H153, and Q156. The L-aspartate site is built by R193 and R247. Carbamoyl phosphate-binding residues include G288 and P289.

This sequence belongs to the aspartate/ornithine carbamoyltransferase superfamily. ATCase family. Heterododecamer (2C3:3R2) of six catalytic PyrB chains organized as two trimers (C3), and six regulatory PyrI chains organized as three dimers (R2).

The catalysed reaction is carbamoyl phosphate + L-aspartate = N-carbamoyl-L-aspartate + phosphate + H(+). It participates in pyrimidine metabolism; UMP biosynthesis via de novo pathway; (S)-dihydroorotate from bicarbonate: step 2/3. In terms of biological role, catalyzes the condensation of carbamoyl phosphate and aspartate to form carbamoyl aspartate and inorganic phosphate, the committed step in the de novo pyrimidine nucleotide biosynthesis pathway. The sequence is that of Aspartate carbamoyltransferase catalytic subunit from Erythrobacter litoralis (strain HTCC2594).